The following is a 258-amino-acid chain: UPF0246 protein CKO_03380 (258 aa).

This sequence belongs to the UPF0246 family.

The polypeptide is UPF0246 protein CKO_03380 (Citrobacter koseri (strain ATCC BAA-895 / CDC 4225-83 / SGSC4696)).